Here is a 399-residue protein sequence, read N- to C-terminus: 26S proteasome regulatory subunit 10B homolog A (399 aa).

The residue at position 2 (threonine 2) is an N-acetylthreonine. 180–187 (GPPGTGKT) serves as a coordination point for ATP. Residue lysine 203 forms a Glycyl lysine isopeptide (Lys-Gly) (interchain with G-Cter in ubiquitin) linkage.

It belongs to the AAA ATPase family. In terms of assembly, component of the 19S regulatory particle (RP/PA700) base subcomplex of the 26S proteasome. The 26S proteasome is composed of a core protease (CP), known as the 20S proteasome, capped at one or both ends by the 19S regulatory particle (RP/PA700). The RP/PA700 complex is composed of at least 17 different subunits in two subcomplexes, the base and the lid, which form the portions proximal and distal to the 20S proteolytic core, respectively.

The protein localises to the cytoplasm. It is found in the nucleus. In terms of biological role, the 26S proteasome is involved in the ATP-dependent degradation of ubiquitinated proteins. The regulatory (or ATPase) complex confers ATP dependency and substrate specificity to the 26S complex. This is 26S proteasome regulatory subunit 10B homolog A (RPT4A) from Arabidopsis thaliana (Mouse-ear cress).